A 72-amino-acid polypeptide reads, in one-letter code: Hypotensin-1 (72 aa).

The first 24 residues, 1–24 (MKMMIPVIFSILLLIFSLSSTAMS), serve as a signal peptide directing secretion. Positions 25–35 (LEDEQENMEER) are excised as a propeptide. Ser41 bears the Phosphoserine mark. The disordered stretch occupies residues 53-72 (ETNAKPPARFDPAAFEKSDD). A propeptide spanning residues 61–72 (RFDPAAFEKSDD) is cleaved from the precursor.

The protein belongs to the non-disulfide-bridged peptide (NDBP) superfamily. Undergoes enzymatic cleavages by carboxypeptidases, endopeptidases, and aminopeptidases resulting in at least 46 fragments of this protein. Expressed by the venom gland.

It is found in the secreted. Functionally, agonist of the B2 bradykinin receptor (BDKRB2). Potentiates the hypotensive effect of bradykinin (BK) and induces a direct vasorelaxing effect independent of BK, by endothelium- and nitric oxide (NO)-dependent mechanisms in rat aortic ring preparations. Also exerts proangiogenic, antiinflammatory, and antifibrogenic activities. Does not inhibit the angiotensin-converting enzyme (ACE) but increases its activity, and inhibits neprilysin (NEP) in a non-competitive manner. Exerts intermediate cytotoxicity and pro-inflammatory effects on mouse macrophages, and increases the phagocytic activity of these murine cells. Presents moderate hemolytic activity at physiological concentrations (micromolar range). Does not induce mast cell degranulation, lactate dehydrogenase (LDH) release from mast cells and antimicrobial effects. In vivo, causes intense pain (but no edema formation), when injected in mice hind paws. Also induces discomfort and anxiety in mice, as it moderately diminishes locomotion and moderately increases rearing behavior. The polypeptide is Hypotensin-1 (Tityus serrulatus (Brazilian scorpion)).